The sequence spans 174 residues: Ribosome maturation factor RimP (174 aa).

This sequence belongs to the RimP family.

The protein localises to the cytoplasm. Required for maturation of 30S ribosomal subunits. This Acinetobacter baylyi (strain ATCC 33305 / BD413 / ADP1) protein is Ribosome maturation factor RimP.